The following is a 421-amino-acid chain: Putative bifunctional polynucleotide phosphatase/kinase (421 aa).

The tract at residues 25–231 (DSYLKGIINN…SENLKTNYKL (207 aa)) is phosphatase. The tract at residues 235 to 415 (NPTEIIDEIE…DDPKWKRSFM (181 aa)) is kinase. 265–272 (GQPGSGKS) contacts ATP.

This sequence in the N-terminal section; belongs to the DNA 3' phosphatase family.

The catalysed reaction is a 3'end (2'-deoxyribonucleotide 3'-phosphate)-DNA + H2O = a 3'-end 2'-deoxyribonucleotide-DNA + phosphate. The enzyme catalyses a 5'-end dephospho-2'-deoxyribonucleoside-DNA + ATP = a 5'-end 5'-phospho-2'-deoxyribonucleoside-DNA + ADP + H(+). This chain is Putative bifunctional polynucleotide phosphatase/kinase, found in Acanthamoeba polyphaga mimivirus (APMV).